The chain runs to 149 residues: D-aminoacyl-tRNA deacylase (149 aa).

The Gly-cisPro motif, important for rejection of L-amino acids motif lies at 137-138 (GP).

The protein belongs to the DTD family. As to quaternary structure, homodimer.

It is found in the cytoplasm. The enzyme catalyses glycyl-tRNA(Ala) + H2O = tRNA(Ala) + glycine + H(+). It catalyses the reaction a D-aminoacyl-tRNA + H2O = a tRNA + a D-alpha-amino acid + H(+). Its function is as follows. An aminoacyl-tRNA editing enzyme that deacylates mischarged D-aminoacyl-tRNAs. Also deacylates mischarged glycyl-tRNA(Ala), protecting cells against glycine mischarging by AlaRS. Acts via tRNA-based rather than protein-based catalysis; rejects L-amino acids rather than detecting D-amino acids in the active site. By recycling D-aminoacyl-tRNA to D-amino acids and free tRNA molecules, this enzyme counteracts the toxicity associated with the formation of D-aminoacyl-tRNA entities in vivo and helps enforce protein L-homochirality. In Anaeromyxobacter dehalogenans (strain 2CP-C), this protein is D-aminoacyl-tRNA deacylase.